Consider the following 699-residue polypeptide: PTS system glucose-specific EIICBA component (699 aa).

The region spanning 3 to 424 (KALFGVLQKI…FNLKTPGRED (422 aa)) is the PTS EIIC type-1 domain. A run of 11 helical transmembrane segments spans residues 16–36 (LMLPVAILPAAGILLAIGNAM), 66–86 (IVFDNLPLLFAVGVAIGLANG), 89–109 (VAGIAAIIGYLVMNVSMSAVL), 139–159 (IPTLATGVFGGIIVGVLAALL), 180–200 (FVPIVTSISALILGLIMLVIW), 233–253 (LIPFGLHHIFYSPFWYEFFSY), 283–303 (FMTGKYPFMMFGLPAAALAIY), 313–333 (LVAGIMGSAALTSFLTGITEP), 338–358 (FLFVAPVLFAIHCLFAGLSFM), 365–385 (VKIGMTFSGGLIDYFLFGILP), and 388–408 (TAWWLVIPVGLGLAVIYYFGF). Positions 439-520 (GDLPYEILQA…QDIIAGRKPR (82 aa)) constitute a PTS EIIB type-1 domain. Residue C461 is the Phosphocysteine intermediate; for EIIB activity of the active site. The region spanning 568 to 672 (DQVFSGKMMG…SLMTPIVFTN (105 aa)) is the PTS EIIA type-1 domain. H620 functions as the Tele-phosphohistidine intermediate; for EIIA activity in the catalytic mechanism.

It localises to the cell membrane. It catalyses the reaction N(pros)-phospho-L-histidyl-[protein] + D-glucose(out) = D-glucose 6-phosphate(in) + L-histidyl-[protein]. The catalysed reaction is D-glucosamine(out) + N(pros)-phospho-L-histidyl-[protein] = D-glucosamine 6-phosphate(in) + L-histidyl-[protein]. Its function is as follows. The phosphoenolpyruvate-dependent sugar phosphotransferase system (sugar PTS), a major carbohydrate active transport system, catalyzes the phosphorylation of incoming sugar substrates concomitantly with their translocation across the cell membrane. This system is involved in glucose transport. The system can also transport glucosamine. Functionally, in addition, plays an important role in the phosphorylation of EIIA-deficient PTS transporters. The EIIA domain can transfer a phosphoryl group to EIIA-deficient PTS transporters, enabling growth with maltose, N-acetylglucosamine, sucrose or trehalose as the sole carbon source. This chain is PTS system glucose-specific EIICBA component (ptsG), found in Bacillus subtilis (strain 168).